Reading from the N-terminus, the 204-residue chain is Small ribosomal subunit protein uS4 (204 aa).

A disordered region spans residues glycine 21–serine 45. The 64-residue stretch at arginine 93–valine 156 folds into the S4 RNA-binding domain.

Belongs to the universal ribosomal protein uS4 family. As to quaternary structure, part of the 30S ribosomal subunit. Contacts protein S5. The interaction surface between S4 and S5 is involved in control of translational fidelity.

In terms of biological role, one of the primary rRNA binding proteins, it binds directly to 16S rRNA where it nucleates assembly of the body of the 30S subunit. With S5 and S12 plays an important role in translational accuracy. This chain is Small ribosomal subunit protein uS4, found in Acidiphilium cryptum (strain JF-5).